The primary structure comprises 262 residues: tRNA pseudouridine synthase A (262 aa).

Asp-51 serves as the catalytic Nucleophile. Tyr-109 contacts substrate.

This sequence belongs to the tRNA pseudouridine synthase TruA family. Homodimer.

It carries out the reaction uridine(38/39/40) in tRNA = pseudouridine(38/39/40) in tRNA. Its function is as follows. Formation of pseudouridine at positions 38, 39 and 40 in the anticodon stem and loop of transfer RNAs. In Legionella pneumophila (strain Paris), this protein is tRNA pseudouridine synthase A.